The following is a 290-amino-acid chain: 33 kDa chaperonin (290 aa).

2 disulfide bridges follow: Cys235-Cys237 and Cys268-Cys271.

The protein belongs to the HSP33 family. Under oxidizing conditions two disulfide bonds are formed involving the reactive cysteines. Under reducing conditions zinc is bound to the reactive cysteines and the protein is inactive.

The protein localises to the cytoplasm. Functionally, redox regulated molecular chaperone. Protects both thermally unfolding and oxidatively damaged proteins from irreversible aggregation. Plays an important role in the bacterial defense system toward oxidative stress. The protein is 33 kDa chaperonin of Streptococcus mutans serotype c (strain ATCC 700610 / UA159).